Consider the following 379-residue polypeptide: Pentatricopeptide repeat-containing protein At3g25210, mitochondrial (379 aa).

PPR repeat units follow at residues 142–177, 179–221, 222–256, 257–291, 292–326, and 327–361; these read SVPL…DDSK, DLET…GVIP, DTFV…GSEP, NAYT…GMVP, NGSC…SLSP, and DMLT…DPVM.

It belongs to the PPR family. P subfamily.

The protein resides in the mitochondrion. This chain is Pentatricopeptide repeat-containing protein At3g25210, mitochondrial, found in Arabidopsis thaliana (Mouse-ear cress).